The following is a 203-amino-acid chain: Dephospho-CoA kinase (203 aa).

Residues 10 to 203 form the DPCK domain; that stretch reads IIGITGNIGS…LTGGAKGGRG (194 aa). Position 18–23 (18–23) interacts with ATP; that stretch reads GSGKST.

The protein belongs to the CoaE family.

The protein localises to the cytoplasm. The enzyme catalyses 3'-dephospho-CoA + ATP = ADP + CoA + H(+). Its pathway is cofactor biosynthesis; coenzyme A biosynthesis; CoA from (R)-pantothenate: step 5/5. Functionally, catalyzes the phosphorylation of the 3'-hydroxyl group of dephosphocoenzyme A to form coenzyme A. This chain is Dephospho-CoA kinase, found in Thermus thermophilus (strain ATCC BAA-163 / DSM 7039 / HB27).